The sequence spans 310 residues: DDRGK domain-containing protein 1 (310 aa).

A helical transmembrane segment spans residues 1–21; that stretch reads MAAIIYLAIAAVASILLFVAV. Residues 22-310 are Cytoplasmic-facing; it reads KLLSTDTKTE…DSPAEISVNA (289 aa). 2 disordered regions span residues 38–85 and 110–162; these read VGEL…DEYQ and KAEK…LKEE. The span at 52–70 shows a compositional bias: basic residues; the sequence is PRARARRGLRNKTNRSKTQ. Residues 76–85 are compositionally biased toward acidic residues; it reads DYDDYDDEYQ.

The protein belongs to the DDRGK1 family.

The protein localises to the endoplasmic reticulum membrane. Its function is as follows. Substrate adapter for ufmylation, the covalent attachment of the ubiquitin-like modifier UFM1 to substrate proteins. The chain is DDRGK domain-containing protein 1 from Trichoplax adhaerens (Trichoplax reptans).